A 319-amino-acid polypeptide reads, in one-letter code: MKPEKKLPVLDLISAEMKTVVNTLQPDLPPWPATGTIAEQRQYYTLERRFWNAGAPEMATRAYMVPTKYGQVETRLFCPQPDSPATLFYLHGGGFILGNLDTHDRIMRLLASYSQCTVIGIDYTLSPEARFPQAIEEIVAACCYFHQQAEDYQINMSRIGFAGDSAGAMLALASALWLRDKQIDCGKVAGVLLWYGLYGLRDSVTRRLLGGVWDGLTQQDLQMYEEAYLSNDADRESPYYCLFNNDLTREVPPCFIAGAEFDPLLDDSRLLYQTLAAHQQPCEFKLYPGTLHAFLHYSRMMKTADEALRDGAQFFTAQL.

The Involved in the stabilization of the negatively charged intermediate by the formation of the oxyanion hole signature appears at H91–G93. Catalysis depends on residues S165, D262, and H292.

The protein belongs to the 'GDXG' lipolytic enzyme family. As to quaternary structure, homodimer. Interacts with MalT and MelA.

It localises to the cytoplasm. In terms of biological role, displays esterase activity towards short chain fatty esters (acyl chain length of up to 8 carbons). Able to hydrolyze triacetylglycerol (triacetin) and tributyrylglycerol (tributyrin), but not trioleylglycerol (triolein) or cholesterol oleate. Negatively regulates MalT activity by antagonizing maltotriose binding. Inhibits MelA galactosidase activity. The chain is Acetyl esterase from Escherichia coli O17:K52:H18 (strain UMN026 / ExPEC).